A 496-amino-acid polypeptide reads, in one-letter code: Stomatal closure-related actin-binding protein 1 (496 aa).

The stretch at arginine 126 to methionine 269 forms a coiled coil.

This sequence belongs to the SCAB family. As to quaternary structure, dimer. Dimerization is required for actin-binding activity. Expressed in roots, stems, leaves, flowers, siliques and guard cells.

Its subcellular location is the cytoplasm. It is found in the cytoskeleton. In terms of biological role, plant-specific actin binding protein that bundles and stabilizes microfilaments (MFs). Has no nucleation or capping activity. Regulates MF reorganization during stomatal closure. The binding to F-actin is insensitive to Ca(2+) and pH. Binds weakly to inositol phosphates. The chain is Stomatal closure-related actin-binding protein 1 from Arabidopsis thaliana (Mouse-ear cress).